The sequence spans 77 residues: Acyl carrier protein (77 aa).

The Carrier domain maps to 2-77; sequence ADVLERVTKI…DAVNYIKSRL (76 aa). At S37 the chain carries O-(pantetheine 4'-phosphoryl)serine.

The protein belongs to the acyl carrier protein (ACP) family. In terms of processing, 4'-phosphopantetheine is transferred from CoA to a specific serine of apo-ACP by AcpS. This modification is essential for activity because fatty acids are bound in thioester linkage to the sulfhydryl of the prosthetic group.

The protein localises to the cytoplasm. Its pathway is lipid metabolism; fatty acid biosynthesis. In terms of biological role, carrier of the growing fatty acid chain in fatty acid biosynthesis. The sequence is that of Acyl carrier protein from Geobacillus kaustophilus (strain HTA426).